We begin with the raw amino-acid sequence, 216 residues long: UPF0502 protein Pmen_2627 (216 aa).

This sequence belongs to the UPF0502 family.

This is UPF0502 protein Pmen_2627 from Ectopseudomonas mendocina (strain ymp) (Pseudomonas mendocina).